Consider the following 133-residue polypeptide: Small ribosomal subunit protein uS19 (133 aa).

The protein belongs to the universal ribosomal protein uS19 family.

In terms of biological role, protein S19 forms a complex with S13 that binds strongly to the 16S ribosomal RNA. The polypeptide is Small ribosomal subunit protein uS19 (Thermococcus sibiricus (strain DSM 12597 / MM 739)).